A 127-amino-acid chain; its full sequence is Histidine-containing phosphotransfer protein 4 (127 aa).

The HPt domain occupies 27–122 (NPNFVEEVSA…STLRKKLEHY (96 aa)). Histidine 68 carries the phosphohistidine modification.

As to quaternary structure, interacts with the B-type response regulators ARR1 and ARR2. In terms of processing, two-component system major event consists of a His-to-Asp phosphorelay between a sensor histidine kinase (HK) and a response regulator (RR). In plants, the His-to-Asp phosphorelay involves an additional intermediate named Histidine-containing phosphotransfer protein (HPt). This multistep phosphorelay consists of a His-Asp-His-Asp sequential transfer of a phosphate group between first a His and an Asp of the HK protein, followed by the transfer to a conserved His of the HPt protein and finally the transfer to an Asp in the receiver domain of the RR protein. As to expression, predominantly expressed in aerial parts of the plant.

It localises to the cytoplasm. The protein localises to the cytosol. It is found in the nucleus. Its function is as follows. Functions as a two-component phosphorelay mediator between cytokinin sensor histidine kinases and response regulators (B-type ARRs). Plays an important role in propagating cytokinin signal transduction through the multistep His-to-Asp phosphorelay. This is Histidine-containing phosphotransfer protein 4 (AHP4) from Arabidopsis thaliana (Mouse-ear cress).